The chain runs to 377 residues: tRNA-specific 2-thiouridylase MnmA (377 aa).

Residues 12–19 and Met38 contribute to the ATP site; that span reads GMSGGVDS. The interval 98–100 is interaction with target base in tRNA; it reads NPD. Cys103 functions as the Nucleophile in the catalytic mechanism. Cys103 and Cys200 form a disulfide bridge. Gly127 lines the ATP pocket. The interval 150-152 is interaction with tRNA; that stretch reads KDQ. Cys200 serves as the catalytic Cysteine persulfide intermediate. An interaction with tRNA region spans residues 314-315; that stretch reads RY.

The protein belongs to the MnmA/TRMU family.

It is found in the cytoplasm. It catalyses the reaction S-sulfanyl-L-cysteinyl-[protein] + uridine(34) in tRNA + AH2 + ATP = 2-thiouridine(34) in tRNA + L-cysteinyl-[protein] + A + AMP + diphosphate + H(+). Catalyzes the 2-thiolation of uridine at the wobble position (U34) of tRNA, leading to the formation of s(2)U34. This is tRNA-specific 2-thiouridylase MnmA from Limosilactobacillus reuteri (strain DSM 20016) (Lactobacillus reuteri).